Reading from the N-terminus, the 518-residue chain is GTPase MTG2, mitochondrial (518 aa).

The N-terminal 23 residues, 1–23 (MSIAWSSVFKRELRLERFLPRVY), are a transit peptide targeting the mitochondrion. The region spanning 89-339 (GNFVDVRIVK…QHFLFELKSI (251 aa)) is the Obg domain. Residues 340 to 512 (ADLGLIGLPN…LKKKMFKCAR (173 aa)) enclose the OBG-type G domain. Residues 346 to 353 (GLPNAGKS), 394 to 398 (DIPGI), and 460 to 463 (NKVD) each bind GTP.

This sequence belongs to the TRAFAC class OBG-HflX-like GTPase superfamily. OBG GTPase family. Interacts with the mitochondrial 54S large ribosomal subunit.

The protein resides in the mitochondrion inner membrane. In terms of biological role, required for mitochondrial protein synthesis. May be involved in mitochondrial ribosome biogenesis. This is GTPase MTG2, mitochondrial (MTG2) from Saccharomyces cerevisiae (strain ATCC 204508 / S288c) (Baker's yeast).